A 492-amino-acid polypeptide reads, in one-letter code: N-succinylglutamate 5-semialdehyde dehydrogenase (492 aa).

220–225 (GSANTG) lines the NAD(+) pocket. Active-site residues include E243 and C277.

The protein belongs to the aldehyde dehydrogenase family. AstD subfamily.

The enzyme catalyses N-succinyl-L-glutamate 5-semialdehyde + NAD(+) + H2O = N-succinyl-L-glutamate + NADH + 2 H(+). Its pathway is amino-acid degradation; L-arginine degradation via AST pathway; L-glutamate and succinate from L-arginine: step 4/5. Its function is as follows. Catalyzes the NAD-dependent reduction of succinylglutamate semialdehyde into succinylglutamate. This chain is N-succinylglutamate 5-semialdehyde dehydrogenase, found in Escherichia coli (strain UTI89 / UPEC).